Here is a 256-residue protein sequence, read N- to C-terminus: ATP synthase peripheral stalk subunit b, mitochondrial (256 aa).

Residues 1–42 constitute a mitochondrion transit peptide; it reads MLSRVVLSAAAAAAPSLKNAALLGPGVLQATRIFHTGQPSLA. Lysine 131 is subject to N6-succinyllysine. An N6-acetyllysine mark is found at lysine 139, lysine 154, lysine 162, lysine 221, lysine 233, and lysine 244.

This sequence belongs to the eukaryotic ATPase B chain family. Component of the ATP synthase complex composed at least of ATP5F1A/subunit alpha, ATP5F1B/subunit beta, ATP5MC1/subunit c (homooctomer), MT-ATP6/subunit a, MT-ATP8/subunit 8, ATP5ME/subunit e, ATP5MF/subunit f, ATP5MG/subunit g, ATP5MK/subunit k, ATP5MJ/subunit j, ATP5F1C/subunit gamma, ATP5F1D/subunit delta, ATP5F1E/subunit epsilon, ATP5PF/subunit F6, ATP5PB/subunit b, ATP5PD/subunit d, ATP5PO/subunit OSCP. ATP synthase complex consists of a soluble F(1) head domain (subunits alpha(3) and beta(3)) - the catalytic core - and a membrane F(0) domain - the membrane proton channel (subunits c, a, 8, e, f, g, k and j). These two domains are linked by a central stalk (subunits gamma, delta, and epsilon) rotating inside the F1 region and a stationary peripheral stalk (subunits F6, b, d, and OSCP).

It is found in the mitochondrion. The protein localises to the mitochondrion inner membrane. Its function is as follows. Subunit b, of the mitochondrial membrane ATP synthase complex (F(1)F(0) ATP synthase or Complex V) that produces ATP from ADP in the presence of a proton gradient across the membrane which is generated by electron transport complexes of the respiratory chain. ATP synthase complex consist of a soluble F(1) head domain - the catalytic core - and a membrane F(1) domain - the membrane proton channel. These two domains are linked by a central stalk rotating inside the F(1) region and a stationary peripheral stalk. During catalysis, ATP synthesis in the catalytic domain of F(1) is coupled via a rotary mechanism of the central stalk subunits to proton translocation. In vivo, can only synthesize ATP although its ATP hydrolase activity can be activated artificially in vitro. Part of the complex F(0) domain. Part of the complex F(0) domain and the peripheric stalk, which acts as a stator to hold the catalytic alpha(3)beta(3) subcomplex and subunit a/ATP6 static relative to the rotary elements. The sequence is that of ATP synthase peripheral stalk subunit b, mitochondrial from Bos taurus (Bovine).